We begin with the raw amino-acid sequence, 630 residues long: Plastin-3 (630 aa).

EF-hand domains are found at residues 12 to 47 (DELD…ANMP) and 52 to 87 (KVRE…VKSS). The Ca(2+) site is built by D25, N27, N29, E36, D65, N67, D69, K71, and E76. Actin-binding stretches follow at residues 109–382 (TSEL…ALTK) and 383–627 (PENQ…GRGM). Calponin-homology (CH) domains are found at residues 123 to 239 (EEEK…KIGL) and 267 to 378 (LSPE…NKYP). 4 positions are modified to phosphoserine: S268, S293, S326, and S339. T391 is modified (phosphothreonine). Calponin-homology (CH) domains are found at residues 397 to 506 (TREE…RRYT) and 518 to 627 (KATD…GRGM).

As to quaternary structure, monomer.

Its subcellular location is the cytoplasm. In terms of biological role, actin-bundling protein. The sequence is that of Plastin-3 (Pls3) from Rattus norvegicus (Rat).